Here is a 2355-residue protein sequence, read N- to C-terminus: Acetyl-CoA carboxylase 2 (2355 aa).

A Biotin carboxylation domain is found at 138-645; it reads PIHSILVATN…HTGWLDSRIA (508 aa). In terms of domain architecture, ATP-grasp spans 291 to 485; it reads GRSLVTVPEE…AAQVAVGMGI (195 aa). Position 317–374 (317–374) interacts with ATP; the sequence is CQVVGYPAMIKASWGGGGKGIRKVHNDDEVRALFKQVQGEVPGSPIFIMKVASQSRHL. Residues Glu440, Glu454, and Asn456 each coordinate Mg(2+). Mn(2+)-binding residues include Glu440, Glu454, and Asn456. Arg458 is an active-site residue. Residues 772-846 enclose the Biotinyl-binding domain; that stretch reads LQNDHDPSKL…QAGELIAKLD (75 aa). Lys813 bears the N6-biotinyllysine mark. The residue at position 1133 (Thr1133) is a Phosphothreonine. A Phosphoserine modification is found at Ser1293. The region spanning 1593 to 1932 is the CoA carboxyltransferase N-terminal domain; that stretch reads QYKPLNNLDR…YVGGPLPVLA (340 aa). The segment at 1593-2251 is carboxyltransferase; that stretch reads QYKPLNNLDR…ESSLVRNIRK (659 aa). The CoA site is built by Arg1841, Lys2142, and Arg2144. Residues 1936–2251 enclose the CoA carboxyltransferase C-terminal domain; sequence PPERTVEYIP…ESSLVRNIRK (316 aa).

As to quaternary structure, homodimer. Biotin serves as cofactor. It depends on Mg(2+) as a cofactor. Requires Mn(2+) as cofactor. In terms of tissue distribution, widely expressed at low levels.

It localises to the cytoplasm. The protein localises to the cytosol. It catalyses the reaction hydrogencarbonate + acetyl-CoA + ATP = malonyl-CoA + ADP + phosphate + H(+). It carries out the reaction N(6)-biotinyl-L-lysyl-[protein] + hydrogencarbonate + ATP = N(6)-carboxybiotinyl-L-lysyl-[protein] + ADP + phosphate + H(+). It participates in lipid metabolism; malonyl-CoA biosynthesis; malonyl-CoA from acetyl-CoA: step 1/1. Its function is as follows. Multifunctional enzyme that catalyzes the carboxylation of acetyl-CoA, forming malonyl-CoA, which is used in the plastid for fatty acid synthesis and in the cytosol in various biosynthetic pathways including fatty acid elongation. In Arabidopsis thaliana (Mouse-ear cress), this protein is Acetyl-CoA carboxylase 2 (ACC2).